A 254-amino-acid polypeptide reads, in one-letter code: Adenosylcobinamide-GDP ribazoletransferase (254 aa).

The next 7 helical transmembrane spans lie at 27–47, 50–70, 104–124, 131–151, 170–190, 194–214, and 233–253; these read SSLY…VLFA, GMGA…GFIL, VGSF…ICLL, AYGM…LLAA, AGWP…FVLL, VVPS…VGWL, and LVEI…FSAI.

Belongs to the CobS family. Mg(2+) serves as cofactor.

The protein resides in the cell inner membrane. The enzyme catalyses alpha-ribazole + adenosylcob(III)inamide-GDP = adenosylcob(III)alamin + GMP + H(+). The catalysed reaction is alpha-ribazole 5'-phosphate + adenosylcob(III)inamide-GDP = adenosylcob(III)alamin 5'-phosphate + GMP + H(+). It participates in cofactor biosynthesis; adenosylcobalamin biosynthesis; adenosylcobalamin from cob(II)yrinate a,c-diamide: step 7/7. Its function is as follows. Joins adenosylcobinamide-GDP and alpha-ribazole to generate adenosylcobalamin (Ado-cobalamin). Also synthesizes adenosylcobalamin 5'-phosphate from adenosylcobinamide-GDP and alpha-ribazole 5'-phosphate. The chain is Adenosylcobinamide-GDP ribazoletransferase from Chlorobaculum parvum (strain DSM 263 / NCIMB 8327) (Chlorobium vibrioforme subsp. thiosulfatophilum).